The following is a 238-amino-acid chain: Ubiquinone biosynthesis O-methyltransferase (238 aa).

S-adenosyl-L-methionine contacts are provided by arginine 38, glycine 57, aspartate 78, and leucine 124.

The protein belongs to the methyltransferase superfamily. UbiG/COQ3 family.

It catalyses the reaction a 3-demethylubiquinol + S-adenosyl-L-methionine = a ubiquinol + S-adenosyl-L-homocysteine + H(+). The catalysed reaction is a 3-(all-trans-polyprenyl)benzene-1,2-diol + S-adenosyl-L-methionine = a 2-methoxy-6-(all-trans-polyprenyl)phenol + S-adenosyl-L-homocysteine + H(+). It participates in cofactor biosynthesis; ubiquinone biosynthesis. O-methyltransferase that catalyzes the 2 O-methylation steps in the ubiquinone biosynthetic pathway. The polypeptide is Ubiquinone biosynthesis O-methyltransferase (Marinobacter nauticus (strain ATCC 700491 / DSM 11845 / VT8) (Marinobacter aquaeolei)).